The chain runs to 245 residues: Eukaryotic translation initiation factor 6 (245 aa).

It belongs to the eIF-6 family. In terms of assembly, monomer. Associates with the 60S ribosomal subunit.

The protein resides in the cytoplasm. The protein localises to the nucleus. It is found in the nucleolus. In terms of biological role, binds to the 60S ribosomal subunit and prevents its association with the 40S ribosomal subunit to form the 80S initiation complex in the cytoplasm. May also be involved in ribosome biogenesis. In Ostreococcus lucimarinus (strain CCE9901), this protein is Eukaryotic translation initiation factor 6.